Consider the following 240-residue polypeptide: Homeobox protein notochord (240 aa).

The span at 1–13 (MSSPAPSGTQVQP) shows a compositional bias: polar residues. 2 disordered regions span residues 1 to 21 (MSSPAPSGTQVQPGSLRPCPG) and 208 to 240 (QKLKLPSSSVMEEPSSSSDGNIQSEDAELGIGS). Positions 149–208 (TKRVRTTFNLQQLQELEKVFAKQHNLVGKERAQLAARLHLTENQVRIWFQNRRVKYQKQQ) form a DNA-binding region, homeobox. Low complexity predominate over residues 213 to 225 (PSSSVMEEPSSSS).

It is found in the nucleus. In terms of biological role, transcription factor that controls node morphogenesis. Acts downstream of both FOXA2 and Brachyury (T) during notochord development. Is essential for cilia formation in the posterior notochord (PNC) and for left-right patterning; acts upstream of FOXJ1 and RFX3 in this process and is required for the expression of various components important for axonemal assembly and function. Plays a role in regulating axial versus paraxial cell fate. Activates the transcription of ciliary proteins C11orf97 homolog, FAM183B and SPACA9 in the embryonic ventral node. This is Homeobox protein notochord (Noto) from Mus musculus (Mouse).